The chain runs to 839 residues: Protein translocase subunit SecA (839 aa).

Residues Gln-85, 103–107, and Asp-493 contribute to the ATP site; that span reads GEGKT. Over residues 780 to 790 the composition is skewed to basic and acidic residues; sequence QIHEQERERAS. The interval 780–839 is disordered; it reads QIHEQERERASQRATTAAPQNIQSQQSANTDDLPKVERNEACPCGSGKKFKNCHGRKSFS. Residues 791 to 809 show a composition bias toward polar residues; the sequence is QRATTAAPQNIQSQQSANT. 4 residues coordinate Zn(2+): Cys-821, Cys-823, Cys-832, and His-833. Basic residues predominate over residues 827 to 839; it reads KKFKNCHGRKSFS.

Belongs to the SecA family. In terms of assembly, monomer and homodimer. Part of the essential Sec protein translocation apparatus which comprises SecA, SecYEG and auxiliary proteins SecDF. Other proteins may also be involved. It depends on Zn(2+) as a cofactor.

The protein localises to the cell membrane. Its subcellular location is the cytoplasm. The catalysed reaction is ATP + H2O + cellular proteinSide 1 = ADP + phosphate + cellular proteinSide 2.. Its function is as follows. Part of the Sec protein translocase complex. Interacts with the SecYEG preprotein conducting channel. Has a central role in coupling the hydrolysis of ATP to the transfer of proteins into and across the cell membrane, serving as an ATP-driven molecular motor driving the stepwise translocation of polypeptide chains across the membrane. The protein is Protein translocase subunit SecA of Streptococcus pyogenes serotype M1.